A 149-amino-acid polypeptide reads, in one-letter code: 3-hydroxyacyl-[acyl-carrier-protein] dehydratase FabZ (149 aa).

Residue His-49 is part of the active site.

Belongs to the thioester dehydratase family. FabZ subfamily.

Its subcellular location is the cytoplasm. The enzyme catalyses a (3R)-hydroxyacyl-[ACP] = a (2E)-enoyl-[ACP] + H2O. Its function is as follows. Involved in unsaturated fatty acids biosynthesis. Catalyzes the dehydration of short chain beta-hydroxyacyl-ACPs and long chain saturated and unsaturated beta-hydroxyacyl-ACPs. This is 3-hydroxyacyl-[acyl-carrier-protein] dehydratase FabZ from Sulfurovum sp. (strain NBC37-1).